The sequence spans 119 residues: Putative nitrilase-like protein YIL165C (119 aa).

The CN hydrolase domain maps to 1–82; sequence MKNIAYEGRL…EGLLTAEINT (82 aa). Residue Asp-21 is the Proton acceptor of the active site.

The protein belongs to the carbon-nitrogen hydrolase superfamily. Nitrilase family.

This chain is Putative nitrilase-like protein YIL165C, found in Saccharomyces cerevisiae (strain ATCC 204508 / S288c) (Baker's yeast).